We begin with the raw amino-acid sequence, 627 residues long: Protein fem-1 homolog B (627 aa).

ANK repeat units follow at residues 45 to 74 (QRST…VQTQ), 87 to 116 (DGAT…NVNH), 120 to 149 (TNST…NISI), and 153 to 182 (YDNT…DPNA). Zn(2+) contacts are provided by histidine 185, cysteine 186, and histidine 218. 2 ANK repeats span residues 186-215 (CGAT…AIVV) and 218-248 (HGMT…DRRS). Residues 344 to 377 (SHPIIYRGAVYADNMEFEQCIKLWLHALHLRQKG) form a TPR repeat. ANK repeat units follow at residues 483 to 527 (EGFT…EVNA) and 531 to 568 (EGNS…HTDM).

Belongs to the fem-1 family. As to quaternary structure, component of a CRL2 E3 ubiquitin-protein ligase complex, also named ECS (Elongin BC-CUL2/5-SOCS-box protein) complex, composed of CUL2, Elongin BC (ELOB and ELOC), RBX1 and substrate-specific adapter FEM1B. Homooligomer. Interacts with PPM1F and PHTF1. Interacts with the death domain of FAS/TNFRSF6 and TNFRSF1A. Interacts with CHEK1. Interacts with NKX3-1. In terms of tissue distribution, widely expressed. Highly expressed in testis. Weakly expressed in other tissues.

It localises to the cytoplasm. Its subcellular location is the nucleus. It functions in the pathway protein modification; protein ubiquitination. Its activity is regulated as follows. Activity of the CRL2(FEM1B) complex toward FNIP1 is inhibited by BEX family proteins (BEX1, BEX2, BEX3, BEX4 and/or BEX5) in absence of reductive stress. Mechanistically, BEX proteins act as pseudosubstrate inhibitors that associate with FEM1B via zinc in absence of reductive stress, thereby preventing association between FEM1B and FNIP1. In terms of biological role, substrate-recognition component of a Cul2-RING (CRL2) E3 ubiquitin-protein ligase complex of the DesCEND (destruction via C-end degrons) pathway, which recognizes a C-degron located at the extreme C terminus of target proteins, leading to their ubiquitination and degradation. The C-degron recognized by the DesCEND pathway is usually a motif of less than ten residues and can be present in full-length proteins, truncated proteins or proteolytically cleaved forms. The CRL2(FEM1B) complex specifically recognizes proteins ending with -Gly-Leu-Asp-Arg, such as CDK5R1, leading to their ubiquitination and degradation. Also acts as a regulator of the reductive stress response by mediating ubiquitination of reduced FNIP1: in response to reductive stress, the CRL2(FEM1B) complex specifically recognizes a conserved Cys degron in FNIP1 when this degron is reduced, leading to FNIP1 degradation and subsequent activation of mitochondria to recalibrate reactive oxygen species (ROS). Mechanistically, recognizes and binds reduced FNIP1 through two interface zinc ions, which act as a molecular glue that recruit reduced FNIP1 to FEM1B. Promotes ubiquitination of GLI1, suppressing GLI1 transcriptional activator activity. Promotes ubiquitination and degradation of ANKRD37. Promotes ubiquitination and degradation of SLBP. Involved in apoptosis by acting as a death receptor-associated protein that mediates apoptosis. Also involved in glucose homeostasis in pancreatic islet. May also act as an adapter/mediator in replication stress-induced signaling that leads to the activation of CHEK1. This is Protein fem-1 homolog B from Homo sapiens (Human).